A 159-amino-acid polypeptide reads, in one-letter code: uncharacterized protein (159 aa).

The next 3 membrane-spanning stretches (helical) occupy residues 16–36, 84–104, and 112–132; these read IVLPLVQIIHVSGHSFMAFIF, VYAGGCLFNLITIFAINLLII, and VFFYQFVYFSTYYVFFALLPV.

The protein resides in the cell membrane. This is an uncharacterized protein from Bacillus subtilis (strain 168).